The primary structure comprises 646 residues: Anoctamin-10 (646 aa).

The next 8 helical transmembrane spans lie at 210–230 (LYFG…LIGI), 241–261 (DKYV…LEVW), 314–334 (IYLV…YVMM), 357–377 (VLLF…NLLY), 404–424 (VLVF…FVMQ), 502–522 (FLLF…AVLV), 557–577 (LAFE…IALS), and 592–612 (ILTV…LAFV).

Belongs to the anoctamin family.

The protein resides in the membrane. In terms of biological role, does not exhibit calcium-activated chloride channel (CaCC) activity. Can inhibit the activity of ANO1. The polypeptide is Anoctamin-10 (ano10) (Danio rerio (Zebrafish)).